A 29-amino-acid polypeptide reads, in one-letter code: AIPCGESCVWIPCISAAIGCSCKNKVCYR.

Positions 1–29 (AIPCGESCVWIPCISAAIGCSCKNKVCYR) form a cross-link, cyclopeptide (Ala-Arg). Intrachain disulfides connect C4–C20, C8–C22, and C13–C27.

This is a cyclic peptide.

Probably participates in a plant defense mechanism. Inhibits the cytopathic effects of the human immunodeficiency virus. This Chassalia parviflora protein is Circulin-F.